Reading from the N-terminus, the 386-residue chain is Palmitoyltransferase ZDHHC9 (386 aa).

Residues 1–35 lie on the Cytoplasmic side of the membrane; the sequence is MSAVMITRKITRKWEKLPGKNTFCCDGRVMMARQK. A helical membrane pass occupies residues 36–56; that stretch reads GVFYLTLFLIVGTCSLFFAFE. The Lumenal portion of the chain corresponds to 57–63; sequence CPYLAVH. Residues 64-84 form a helical membrane-spanning segment; it reads LSPAIPVFAVLLFVFVMAMLL. The Cytoplasmic portion of the chain corresponds to 85-183; that stretch reads RTSFSDPGVL…NCVGKRNYRY (99 aa). The DHHC domain occupies 139 to 189; it reads KYCYTCKIFRPPRASHCSICDNCVDRFDHHCPWVGNCVGKRNYRYFYLFTL. The S-palmitoyl cysteine intermediate role is filled by C169. The chain crosses the membrane as a helical span at residues 184-204; that stretch reads FYLFTLSLSLLTIYIFAFDIV. Residues 205–224 are Lumenal-facing; sequence HVVLRSVDSGFVNTLKETPG. The chain crosses the membrane as a helical span at residues 225–245; it reads TVLEVLVCFFTLWSVVGLTGF. The Cytoplasmic segment spans residues 246–386; it reads HTYLISLNQT…APAVIKESTH (141 aa). Polar residues predominate over residues 306–334; that stretch reads SCSSAPSNGATTVPVNKSSNPATQTTKSS. Residues 306–386 are disordered; the sequence is SCSSAPSNGA…APAVIKESTH (81 aa).

It belongs to the DHHC palmitoyltransferase family. ERF2/ZDHHC9 subfamily.

The protein resides in the endoplasmic reticulum membrane. It is found in the golgi apparatus membrane. The catalysed reaction is L-cysteinyl-[protein] + hexadecanoyl-CoA = S-hexadecanoyl-L-cysteinyl-[protein] + CoA. Palmitoyltransferase that catalyzes the addition of palmitate onto various protein substrates, such as ADRB2, GSDMD, HRAS, NRAS and CGAS. This chain is Palmitoyltransferase ZDHHC9, found in Danio rerio (Zebrafish).